The primary structure comprises 490 residues: Glutamate--tRNA ligase (490 aa).

Residues 13-23 carry the 'HIGH' region motif; that stretch reads PSPTGTPHVGL. A 'KMSKS' region motif is present at residues 257-261; the sequence is KLSKR. K260 is a binding site for ATP.

It belongs to the class-I aminoacyl-tRNA synthetase family. Glutamate--tRNA ligase type 1 subfamily. In terms of assembly, monomer.

Its subcellular location is the cytoplasm. It carries out the reaction tRNA(Glu) + L-glutamate + ATP = L-glutamyl-tRNA(Glu) + AMP + diphosphate. In terms of biological role, catalyzes the attachment of glutamate to tRNA(Glu) in a two-step reaction: glutamate is first activated by ATP to form Glu-AMP and then transferred to the acceptor end of tRNA(Glu). The sequence is that of Glutamate--tRNA ligase from Mycobacterium tuberculosis (strain ATCC 25177 / H37Ra).